The chain runs to 1738 residues: MGQAVTTPLSLTLDHWKDVERTAHNLSVEVRKRRWVTFCSAEWPTFNVGWPRDGTFNPDIITQVKIKVFSPGPHGHPDQVPYIVTWEAIAVDPPPWVRPFVHPKPPLSLPPSAPSLPPEPPLSTPPQSSLYPALTSPLNTKPRPQVLPDSGGPLIDLLTEDPPPYRDPGPPSPDGNGDSGEVAPTEGAPDPSPMVSRLRGRKEPPVADSTTSQAFPLRLGGNGQYQYWPFSSSDLYNWKNNNPSFSEDPAKLTALIESVLLTHQPTWDDCQQLLGTLLTGEEKQRVLLEARKAVRGEDGRPTQLPNDINDAFPLERPDWDYNTQRGRNHLVHYRQLLLAGLQNAGRSPTNLAKVKGITQGPNESPSAFLERLKEAYRRYTPYDPEDPGQETNVAMSFIWQSAPDIGRKLERLEDLKSKTLGDLVREAEKIFNKRETPEEREERIRRETEEKEERRRAEDVQREKERDRRRHREMSKLLATVVSGQRQDRQGGERRRPQLDHDQCAYCKEKGHWARDCPKKPRGPRGPRPQASLLTLDDQGGQGQEPPPEPRITLRVGGQPVTFLVDTGAQHSVLTQNPGPLSDKSAWVQGATGGKRYRWTTDRRVHLATGKVTHSFLHVPDCPYPLLGRDLLTKLKAQIHFEGSGAQVVGPMGQPLQVLTLNIEDEYRLHETSKGPDVPLGSTWLSDFPQAWAETGGMGLAVRQAPLIIPLKATSTPVSIKQYPMSQEARLGIKPHIQRLLDQGILVPCQSPWNTPLLPVKKPGTNDYRPVQDLREVNKRVEDIHPTVPNPYNLLSGLPPSHQWYTVLDLKDAFFCLRLHPTSQSLFAFEWRDPEMGISGQLTWTRLPQGFKNSPTLFDEALHRDLADFRIQHPDLILLQYVDDLLLAATSELDCQQGTRALLQTLGDLGYRASAKKAQICQKQVKYLGYLLKEGQRWLTEARKETVMGQPTPKTPRQLREFLGTAGFCRLWIPGFAEMAAPLYPLTKTGTLFEWGPDQQKAYQEIKQALLTAPALGLPDLTKPFELFVDEKQGYAKGVLTQKLGPWRRPVAYLSKKLDPVAAGWPPCLRMVAAIAVLTKDAGKLTMGQPLVILAPHAVEALVKQPPDRWLSNARMTHYQALLLDTDRVQFGPIVALNPATLLPLPEEGLQHDCLDILAEAHGTRPDLTDQPLPDADHTWYTDGSSFLQEGQRKAGAAVTTETEVVWAKALPAGTSAQRAELIALTQALKMAEGKKLNVYTDSRYAFATAHIHGEIYRRRGLLTSEGKEIKNKDEILALLKALFLPKRLSIIHCPGHQKGNRAEARGNRMADQAAREVATRETPETSTLLIENSAPYTHEHFHYTVTDIKDLTKLGATYDDAKKCWVYQGKPVMPDQFTFELLDFLHQLTHLSFSKTKALLERNYCPYYMLNRDRTLKDITETCQACAQVNASKSAVKQGTRVRGHRPGTHWEIDFTEVKPGLYGYKYLLVFIDTFSGWVEAFPTKKETAKVVTKKLLEEIFPRFGMPQVLGTDNGPAFVSKVSQTVADLLGVDWKLHCAYRPQSSGQVERMNRTIKETLTKLTLATGSRDWVLLLPLALYRARNTPGPHGLTPYEILYGAPPPLVNFPDPDMAKVTHNPSLQAHLQALYLVQHEVWRPLAAAYQEQLDRPVVPHPFRVGDTVWVRRHQTKNLEPRWKGPYTVLLTTPTALKVDGIAAWIHAAHVKAADTRIEPPSESTWRVQRSQNPLKIRLTRGTS.

G2 carries the N-myristoyl glycine; by host lipid modification. Residues 110 to 124 (PPSAPSLPPEPPLST) are compositionally biased toward pro residues. Positions 110-218 (PPSAPSLPPE…STTSQAFPLR (109 aa)) are disordered. Positions 111–114 (PSAP) match the PTAP/PSAP motif motif. Positions 130–134 (LYPAL) match the LYPX(n)L motif motif. Residues 161 to 173 (DPPPYRDPGPPSP) show a composition bias toward pro residues. The PPXY motif signature appears at 162 to 165 (PPPY). Phosphoserine; by host is present on S192. The segment at 345 to 393 (GRSPTNLAKVKGITQGPNESPSAFLERLKEAYRRYTPYDPEDPGQETNV) is interaction with host PIAS4. The segment at 430–435 (IFNKRE) is interaction with host UBE2I. 2 stretches are compositionally biased toward basic and acidic residues: residues 434 to 466 (RETPEEREERIRRETEEKEERRRAEDVQREKER) and 486 to 499 (RQDRQGGERRRPQL). Disordered stretches follow at residues 434–499 (RETP…RPQL) and 513–553 (WARD…PRIT). The stretch at 438–478 (EEREERIRRETEEKEERRRAEDVQREKERDRRRHREMSKLL) forms a coiled coil. The CCHC-type zinc-finger motif lies at 502–519 (DQCAYCKEKGHWARDCPK). One can recognise a Peptidase A2 domain in the interval 561–631 (VTFLVDTGAQ…CPYPLLGRDL (71 aa)). D566 (protease; shared with dimeric partner) is an active-site residue. Residues 741 to 932 (LDQGILVPCQ…KQVKYLGYLL (192 aa)) enclose the Reverse transcriptase domain. Mg(2+)-binding residues include D809, D883, D884, D1183, E1221, D1242, and D1312. Residues 1174–1320 (PDADHTWYTD…ADQAAREVAT (147 aa)) form the RNase H type-1 domain. The HHCC-type zinc-finger motif lies at 1387-1427 (HQLTHLSFSKTKALLERNYCPYYMLNRDRTLKDITETCQAC). Residues 1444 to 1602 (RGHRPGTHWE…TPYEILYGAP (159 aa)) form the Integrase catalytic domain. 2 residues coordinate Mg(2+): D1455 and D1514.

This sequence belongs to the retroviral Pol polyprotein family. As to quaternary structure, homohexamer; further associates as homomultimer. The virus core is composed of a lattice formed from hexagonal rings, each containing six capsid monomers. In terms of assembly, interacts (via PPXY motif) with host NEDD4. Interacts (via PSAP motif) with host TSG101. Interacts (via LYPX(n)L motif) with host PDCD6IP. The reverse transcriptase is a monomer (Potential). Interacts (via RNase domains) with host release factor ETF1; this interaction is essential for translational readthrough of amber codon between viral gag and pol genes, as well as for viral replication. As to quaternary structure, homodimer. It depends on Mg(2+) as a cofactor. Ubiquitinated by ITCH. Gag can recruit the ubiquitin ligase Itch in an L domain-independent manner to facilitate virus release via a mechanism that involves Gag ubiquitination. In terms of processing, specific enzymatic cleavages by the viral protease yield mature proteins. The protease is released by autocatalytic cleavage. The polyprotein is cleaved during and after budding, this process is termed maturation. Post-translationally, sumoylated; which is required for virus replication. Phosphorylated on serine residues.

It localises to the virion. The protein resides in the host cell membrane. Its subcellular location is the host late endosome membrane. It is found in the host endosome. The protein localises to the host multivesicular body. It localises to the host cytoplasm. The enzyme catalyses DNA(n) + a 2'-deoxyribonucleoside 5'-triphosphate = DNA(n+1) + diphosphate. It catalyses the reaction Endonucleolytic cleavage to 5'-phosphomonoester.. Its activity is regulated as follows. Most efficiently inhibited by Amprenavir, which is able to block Gag-Pol processing in infected cells. Its function is as follows. Plays a role in budding and is processed by the viral protease during virion maturation outside the cell. During budding, it recruits, in a PPXY-dependent or independent manner, Nedd4-like ubiquitin ligases that conjugate ubiquitin molecules to Gag-Pol, or to Gag-Pol binding host factors. Interaction with HECT ubiquitin ligases probably links the viral protein to the host ESCRT pathway and facilitates release. Functionally, targets Gag and gag-pol polyproteins to the plasma membrane via a multipartite membrane binding signal, that includes its myristoylated N-terminus. Also mediates nuclear localization of the pre-integration complex. Constituent of the pre-integration complex (PIC) which tethers the latter to mitotic chromosomes. This allows the integration of the viral genome into the host DNA. In terms of biological role, forms the spherical core of the virion that encapsulates the genomic RNA-nucleocapsid complex. Its function is as follows. Involved in the packaging and encapsidation of two copies of the genome. Binds with high affinity to conserved UCUG elements within the packaging signal, located near the 5'-end of the genome. This binding is dependent on genome dimerization. Acts as a nucleic acid chaperone which is involved in rearrangement of nucleic acid secondary structures during gRNA retrotranscription. Functionally, the aspartyl protease mediates proteolytic cleavages of Gag and Gag-Pol polyproteins during or shortly after the release of the virion from the plasma membrane. Cleavages take place as an ordered, step-wise cascade to yield mature proteins. This process is called maturation. Displays maximal activity during the budding process just prior to particle release from the cell (Potential). Cleaves the translation initiation factor eIF4G leading to the inhibition of host cap-dependent translation. RT is a multifunctional enzyme that converts the viral dimeric RNA genome into dsDNA in the cytoplasm, shortly after virus entry into the cell. This enzyme displays a DNA polymerase activity that can copy either DNA or RNA templates, and a ribonuclease H (RNase H) activity that cleaves the RNA strand of RNA-DNA heteroduplexes in a partially processive 3' to 5' endonucleasic mode. Conversion of viral genomic RNA into dsDNA requires many steps. A tRNA binds to the primer-binding site (PBS) situated at the 5' end of the viral RNA. RT uses the 3' end of the tRNA primer to perform a short round of RNA-dependent minus-strand DNA synthesis. The reading proceeds through the U5 region and ends after the repeated (R) region which is present at both ends of viral RNA. The portion of the RNA-DNA heteroduplex is digested by the RNase H, resulting in a ssDNA product attached to the tRNA primer. This ssDNA/tRNA hybridizes with the identical R region situated at the 3' end of viral RNA. This template exchange, known as minus-strand DNA strong stop transfer, can be either intra- or intermolecular. RT uses the 3' end of this newly synthesized short ssDNA to perform the RNA-dependent minus-strand DNA synthesis of the whole template. RNase H digests the RNA template except for a polypurine tract (PPT) situated at the 5' end of the genome. It is not clear if both polymerase and RNase H activities are simultaneous. RNase H probably can proceed both in a polymerase-dependent (RNA cut into small fragments by the same RT performing DNA synthesis) and a polymerase-independent mode (cleavage of remaining RNA fragments by free RTs). Secondly, RT performs DNA-directed plus-strand DNA synthesis using the PPT that has not been removed by RNase H as primers. PPT and tRNA primers are then removed by RNase H. The 3' and 5' ssDNA PBS regions hybridize to form a circular dsDNA intermediate. Strand displacement synthesis by RT to the PBS and PPT ends produces a blunt ended, linear dsDNA copy of the viral genome that includes long terminal repeats (LTRs) at both ends. In terms of biological role, catalyzes viral DNA integration into the host chromosome, by performing a series of DNA cutting and joining reactions. This enzyme activity takes place after virion entry into a cell and reverse transcription of the RNA genome in dsDNA. The first step in the integration process is 3' processing. This step requires a complex comprising the viral genome, matrix protein and integrase. This complex is called the pre-integration complex (PIC). The integrase protein removes 2 nucleotides from each 3' end of the viral DNA, leaving recessed CA OH's at the 3' ends. In the second step that requires cell division, the PIC enters cell nucleus. In the third step, termed strand transfer, the integrase protein joins the previously processed 3' ends to the 5' ends of strands of target cellular DNA at the site of integration. The last step is viral DNA integration into host chromosome. This Mus musculus (Mouse) protein is Gag-Pol polyprotein (pol).